Here is a 765-residue protein sequence, read N- to C-terminus: Glycine--tRNA ligase (765 aa).

Residues 1–87 (MSLQLLKALP…LRSAAAEFIM (87 aa)) constitute a mitochondrion transit peptide. Positions 41 to 73 (TTTKPTPSAPPPPPPTQPQQPAATTSWGTKKQN) are disordered. A compositionally biased stretch (pro residues) spans 47-58 (PSAPPPPPPTQP). A WHEP-TRS domain is found at 95–151 (QLAPLRERVQEQGNLVRDLKAKGAPEIDVKKAVAELKARKKLLEDKELALTPSVVSF). Glutamate 331 lines the glycine pocket. Residues 363–365 (RNE) and 374–375 (RV) contribute to the ATP site. Glutamate 382 contributes to the glycine binding site. 489–490 (EC) serves as a coordination point for ATP. Position 609–611 (609–611 (EPS)) interacts with glycine. Residue arginine 616 participates in ATP binding.

The protein belongs to the class-II aminoacyl-tRNA synthetase family. As to quaternary structure, homodimer.

The protein localises to the mitochondrion. It is found in the cytoplasm. The protein resides in the cell projection. It localises to the axon. It catalyses the reaction 2 ATP + H(+) = P(1),P(4)-bis(5'-adenosyl) tetraphosphate + diphosphate. It carries out the reaction tRNA(Gly) + glycine + ATP = glycyl-tRNA(Gly) + AMP + diphosphate. Functionally, catalyzes the ATP-dependent ligation of glycine to the 3'-end of its cognate tRNA, via the formation of an aminoacyl-adenylate intermediate (Gly-AMP). Also produces diadenosine tetraphosphate (Ap4A), a universal pleiotropic signaling molecule needed for cell regulation pathways, by direct condensation of 2 ATPs. Thereby, may play a special role in Ap4A homeostasis. Required for terminal arborization of both dendrites and axons during development. The protein is Glycine--tRNA ligase of Drosophila melanogaster (Fruit fly).